Reading from the N-terminus, the 274-residue chain is Large ribosomal subunit protein uL2c (274 aa).

The disordered stretch occupies residues 230–252 (HPHGGGEGRSPIGRSKPLTPWGK).

It belongs to the universal ribosomal protein uL2 family. Part of the 50S ribosomal subunit.

It is found in the plastid. The polypeptide is Large ribosomal subunit protein uL2c (rpl2) (Euglena longa (Euglenophycean alga)).